A 284-amino-acid chain; its full sequence is Signal peptidase I (284 aa).

A helical membrane pass occupies residues 4 to 22; that stretch reads NFPLLLVIAVAVCGALALV. Topologically, residues 23–58 are cytoplasmic; the sequence is DLVLFAPRRRAAISSYEGQVNEPDPAVLEKLNKEPL. Residues 59–77 traverse the membrane as a helical segment; the sequence is LVEYGKSFFPVLFIVLVLR. Residues 78–284 are Periplasmic-facing; the sequence is SFLVEPFQIP…PNFSRVGVIH (207 aa). Residues serine 90 and lysine 145 contribute to the active site.

The protein belongs to the peptidase S26 family.

It is found in the cell inner membrane. The enzyme catalyses Cleavage of hydrophobic, N-terminal signal or leader sequences from secreted and periplasmic proteins.. This is Signal peptidase I (lepB) from Pseudomonas aeruginosa (strain ATCC 15692 / DSM 22644 / CIP 104116 / JCM 14847 / LMG 12228 / 1C / PRS 101 / PAO1).